Consider the following 507-residue polypeptide: Mandelamide hydrolase (507 aa).

Catalysis depends on charge relay system residues Lys100 and Ser180. Residue Ser204 is the Acyl-ester intermediate of the active site.

Monomer.

It catalyses the reaction (R)-mandelamide + H2O = (R)-mandelate + NH4(+). Its activity is regulated as follows. Inhibited by 3,4-dichloroisocoumarin and PMSF. In terms of biological role, hydrolyzes both the R- and the S-enantiomers of mandelamide, and phenylacetamide. Has lower activity on 3-phenylpropionaide and lactamide. Does not hydrolyze benzamide. Hydrolyzes esters and amides with little steric bulk. Preferentially hydrolyzes aromatic substrates. The chain is Mandelamide hydrolase from Pseudomonas putida (Arthrobacter siderocapsulatus).